Here is a 158-residue protein sequence, read N- to C-terminus: MRKAKPKKRQILPDPVYGDVRVTKFVNHLMYDGKKNTAFSIFYGALDIVKTKHSNEEKSALEIWKAALDNITPQVEVKSRRIGGATFQVPTEIRPERKESISMKNLILYARKRGGKTMADKLAAEIVDAFNNQGAAFKRKEDMHRMAEANRAFAHFRF.

It belongs to the universal ribosomal protein uS7 family. In terms of assembly, part of the 30S ribosomal subunit. Contacts proteins S9 and S11.

One of the primary rRNA binding proteins, it binds directly to 16S rRNA where it nucleates assembly of the head domain of the 30S subunit. Is located at the subunit interface close to the decoding center, probably blocks exit of the E-site tRNA. The chain is Small ribosomal subunit protein uS7 from Porphyromonas gingivalis (strain ATCC BAA-308 / W83).